A 127-amino-acid polypeptide reads, in one-letter code: Fumarate reductase subunit C (127 aa).

The next 3 helical transmembrane spans lie at 30 to 50, 58 to 78, and 107 to 127; these read ATVL…GCLV, GWLA…ALLG, and IIVL…LIVV.

This sequence belongs to the FrdC family. As to quaternary structure, part of an enzyme complex containing four subunits: a flavoprotein (FrdA), an iron-sulfur protein (FrdB), and two hydrophobic anchor proteins (FrdC and FrdD).

The protein resides in the cell inner membrane. Functionally, anchors the catalytic components of the fumarate reductase complex to the cell membrane, binds quinones. In Vibrio parahaemolyticus serotype O3:K6 (strain RIMD 2210633), this protein is Fumarate reductase subunit C.